Reading from the N-terminus, the 550-residue chain is Leucine-rich repeat, immunoglobulin-like domain and transmembrane domain-containing protein 2 (550 aa).

Positions 1-19 (MASVFHYFLLVLVFLDTHA) are cleaved as a signal peptide. One can recognise an LRRNT domain in the interval 23–54 (FCLPGCTCSEESFGRTLQCTSVSLGKIPGNLS). Asn-52 carries N-linked (GlcNAc...) asparagine glycosylation. LRR repeat units follow at residues 80-103 (TLEYLWLNFNNISVIHLGALEHLP), 104-125 (ELRELRLEGNKLCSVPWTAFRA), 128-149 (LLRVLDLKRNKIDALPELALQF), and 152-173 (SLTYLDLSSNRLTVVSKSVFLN). Residues 200 to 252 (NPWVCDCRLRGLVQFVKSITLPVILVNSYLICQGPLSKAGQLFHETELSACMK) form the LRRCT domain. The region spanning 253–341 (PQISTPSANI…SIGKSNLVIS (89 aa)) is the Ig-like domain. A disulfide bridge connects residues Cys-274 and Cys-327. Positions 361-451 (EGNAYIDLRV…QGQCVAFVTG (91 aa)) constitute a Fibronectin type-III domain. A helical transmembrane segment spans residues 466–486 (VTVVLCVVLLAVPVGAYAWAA). Residues 508–550 (SCTPAAPQSKDGSFREHPAVCDDGEGHIDTEGDKEKGGTEDNS) form a disordered region. Basic and acidic residues predominate over residues 519–550 (GSFREHPAVCDDGEGHIDTEGDKEKGGTEDNS).

As to quaternary structure, interacts with LRIT1; may form a heterodimer with LRIT1.

Its subcellular location is the membrane. The polypeptide is Leucine-rich repeat, immunoglobulin-like domain and transmembrane domain-containing protein 2 (LRIT2) (Homo sapiens (Human)).